Consider the following 272-residue polypeptide: uncharacterized protein (272 aa).

Positions 193–250 are disordered; the sequence is AFLLPNNSKGVEKSEENEDGVTDNDSSNVNSSTNESPNPTDINVCSNDDATDNTENNL. Over residues 215–233 the composition is skewed to low complexity; sequence DNDSSNVNSSTNESPNPTD. Polar residues predominate over residues 235-248; sequence NVCSNDDATDNTEN.

It belongs to the pal1 family.

The protein localises to the cytoplasm. It is found in the nucleus. This is an uncharacterized protein from Schizosaccharomyces pombe (strain 972 / ATCC 24843) (Fission yeast).